We begin with the raw amino-acid sequence, 887 residues long: Probable dual specificity protein kinase madd-3 (887 aa).

Disordered stretches follow at residues 77 to 147 (PIKS…ISAA), 163 to 299 (AQPP…PKAL), 313 to 333 (LPQSSNQNTDDGQQPTTSTGG), 347 to 475 (TTIC…KSAA), and 504 to 533 (RKPSRSGLQASQARPKVPEIVSSQRTQHQD). Positions 108-118 (PTQNPVQLPLP) are enriched in low complexity. The span at 121-130 (VSEKPGDKKS) shows a compositional bias: basic and acidic residues. Residues 177–192 (SETNSGSGPVSKQVSG) are compositionally biased toward polar residues. A compositionally biased stretch (low complexity) spans 217-241 (SSASTRAKAASAVAPEANPAPVPTA). 2 stretches are compositionally biased toward polar residues: residues 314–332 (PQSSNQNTDDGQQPTTSTG) and 356–366 (NVPSTSQPQQG). Residues 367–377 (DNEKRLIEKKL) show a composition bias toward basic and acidic residues. The span at 407–419 (LSSNLTTTNNNNN) shows a compositional bias: low complexity. Over residues 439–462 (FSTQAGSGNATTVDDPASTTTSKE) the composition is skewed to polar residues. Residues 551–863 (FTIYDTLGEG…LPEALQHRYF (313 aa)) form the Protein kinase domain. Residues 557 to 565 (LGEGTFGKV) and K580 each bind ATP. The Proton acceptor role is filled by D677.

Belongs to the protein kinase superfamily. CMGC Ser/Thr protein kinase family. Lammer subfamily. Expressed in body wall, vulval and anal depressor muscles.

The protein localises to the cytoplasm. It localises to the nucleus. Probable dual specificity kinase acting on both serine/threonine and tyrosine-containing substrates. Negatively regulates p38 MAPK signaling to allow for the plasma membrane of body wall muscle cells to form projections, also called muscle arms, that extend and connect the body wall muscles to target motor neurons. Negative regulation of p38 MAPK signaling may in turn modulate the trafficking of the muscle specific receptor eva-1 to the lysosome, to ensure proper display of the eva-1 receptor on the plasma membrane of muscle cells and allow for muscle arm extension towards guidance cues. The chain is Probable dual specificity protein kinase madd-3 from Caenorhabditis elegans.